A 103-amino-acid chain; its full sequence is Cytochrome c55X (103 aa).

An N-terminal signal peptide occupies residues 1-17 (MARLALLLVLLAGTAVA). Heme c contacts are provided by Cys36, Cys39, and His40.

Binds 1 heme c group covalently per subunit.

The protein resides in the periplasm. Monoheme c-type cytochrome. This chain is Cytochrome c55X (nirC), found in Paracoccus denitrificans (strain Pd 1222).